Reading from the N-terminus, the 275-residue chain is NADPH-dependent 7-cyano-7-deazaguanine reductase (275 aa).

81 to 83 contacts substrate; that stretch reads IES. 83–84 is an NADPH binding site; the sequence is SK. Cysteine 181 functions as the Thioimide intermediate in the catalytic mechanism. Aspartate 188 (proton donor) is an active-site residue. 220–221 serves as a coordination point for substrate; the sequence is HE. 249–250 serves as a coordination point for NADPH; sequence RG.

It belongs to the GTP cyclohydrolase I family. QueF type 2 subfamily. Homodimer.

Its subcellular location is the cytoplasm. The enzyme catalyses 7-aminomethyl-7-carbaguanine + 2 NADP(+) = 7-cyano-7-deazaguanine + 2 NADPH + 3 H(+). Its pathway is tRNA modification; tRNA-queuosine biosynthesis. Catalyzes the NADPH-dependent reduction of 7-cyano-7-deazaguanine (preQ0) to 7-aminomethyl-7-deazaguanine (preQ1). This is NADPH-dependent 7-cyano-7-deazaguanine reductase from Xylella fastidiosa (strain M23).